A 256-amino-acid chain; its full sequence is Type III pantothenate kinase (256 aa).

Aspartate 7–valine 14 contributes to the ATP binding site. Glycine 108–cysteine 111 contributes to the substrate binding site. The active-site Proton acceptor is the aspartate 110. Aspartate 130 is a binding site for K(+). Residue threonine 133 coordinates ATP. Threonine 185 contacts substrate.

It belongs to the type III pantothenate kinase family. In terms of assembly, homodimer. Requires NH4(+) as cofactor. It depends on K(+) as a cofactor.

The protein localises to the cytoplasm. It carries out the reaction (R)-pantothenate + ATP = (R)-4'-phosphopantothenate + ADP + H(+). It functions in the pathway cofactor biosynthesis; coenzyme A biosynthesis; CoA from (R)-pantothenate: step 1/5. Functionally, catalyzes the phosphorylation of pantothenate (Pan), the first step in CoA biosynthesis. The sequence is that of Type III pantothenate kinase from Bifidobacterium adolescentis (strain ATCC 15703 / DSM 20083 / NCTC 11814 / E194a).